We begin with the raw amino-acid sequence, 345 residues long: Methionine import ATP-binding protein MetN (345 aa).

An ABC transporter domain is found at 2–241 (IKLNNITKIF…PKTELAQEFI (240 aa)). 38–45 (GASGAGKS) is an ATP binding site.

Belongs to the ABC transporter superfamily. Methionine importer (TC 3.A.1.24) family. The complex is composed of two ATP-binding proteins (MetN), two transmembrane proteins (MetI) and a solute-binding protein (MetQ).

The protein localises to the cell inner membrane. The catalysed reaction is L-methionine(out) + ATP + H2O = L-methionine(in) + ADP + phosphate + H(+). It carries out the reaction D-methionine(out) + ATP + H2O = D-methionine(in) + ADP + phosphate + H(+). In terms of biological role, part of the ABC transporter complex MetNIQ involved in methionine import. Responsible for energy coupling to the transport system. The sequence is that of Methionine import ATP-binding protein MetN from Haemophilus influenzae (strain 86-028NP).